Consider the following 577-residue polypeptide: Arginine--tRNA ligase (577 aa).

The 'HIGH' region signature appears at 122 to 132 (PNVAKEMHVGH).

Belongs to the class-I aminoacyl-tRNA synthetase family. Monomer.

It localises to the cytoplasm. It catalyses the reaction tRNA(Arg) + L-arginine + ATP = L-arginyl-tRNA(Arg) + AMP + diphosphate. In Vibrio vulnificus (strain YJ016), this protein is Arginine--tRNA ligase.